Here is a 63-residue protein sequence, read N- to C-terminus: Alpha-conotoxin-like Am1.6 (63 aa).

The first 21 residues, 1–21, serve as a signal peptide directing secretion; sequence MGMRMMFTVFLLVVLATTVVS. Residues 22 to 46 constitute a propeptide that is removed on maturation; the sequence is FTSYRASDGRNAAAKASDLIALTVR. A ser-Xaa-Pro motif, crucial for potent interaction with nAChR region spans residues 50-52; the sequence is SRP.

Belongs to the conotoxin A superfamily. Post-translationally, is not hydroxylated. In terms of processing, contains 2 disulfide bonds. As to expression, expressed by the venom duct.

Its subcellular location is the secreted. Its function is as follows. Alpha-conotoxins act on postsynaptic membranes, they bind to the nicotinic acetylcholine receptors (nAChR) and thus inhibit them. The sequence is that of Alpha-conotoxin-like Am1.6 from Conus amadis (Amadis cone).